Consider the following 660-residue polypeptide: MAKRLVLFAAVVIALVALTTAEGEASRQLQCERELQESSLEACRQVVDQQLAGRLPWSTGLQMRCCQQLRDVSAKCRSVAVSQVARQYEQTVVPPKGGSFYPGETTPLQQLQQGIFWGTSSQTVQGYYPSVTSPRQGSYYPGQASPQQPGQGQQPGKWQEPGQGQQWYYPTSLQQPGQGQQIGKGKQGYYPTSLQQPGQGQQIGQGQQGYYPTSPQHTGQRQQPVQGQQIGQGQQPEQGQQPGQWQQGYYPTSPQQLGQGQQPGQWQQSGQGQQGHYPTSLQQPGQGQQGHYLASQQQPAQGQQGHYPASQQQPGQGQQGHYPASQQQPGQGQQGHYPASQQEPGQGQQGQIPASQQQPGQGQQGHYPASLQQPGQQGHYPTSLQQLGQGQQIGQPGQKQQPGQGQQTGQGQQPEQEQQPGQGQQGYYPTSLQQPGQGQQQGQGQQGYYPTSLQQPGQGQQGHYPASLQQPGQGQGQPGQRQQPGQGQHPEQGQQPGQGQQGYYPTSPQQPGQGQQLGQGQQGYYPTSPQQPGQGQQPGQGQQGHCPMSPQQTGQAQQLGQGQQIGQVQQPGQGQQGYYPTSLQQPGQGQQSGQGQQSGQGHQPGQGQQSGQEKQGYDSPYHVSAEQQAASPMVAKAQQPATQLPTVCRMEGGDALSASQ.

An N-terminal signal peptide occupies residues 1–21; that stretch reads MAKRLVLFAAVVIALVALTTA. A compositionally biased stretch (polar residues) spans 127–136; that stretch reads YYPSVTSPRQ. Residues 127-660 form a disordered region; that stretch reads YYPSVTSPRQ…EGGDALSASQ (534 aa). Low complexity-rich tracts occupy residues 141–166, 187–200, 208–248, and 255–275; these read PGQA…QGQQ, QGYY…PGQG, QGYY…WQQG, and QQLG…GQQG. The span at 276–286 shows a compositional bias: polar residues; that stretch reads HYPTSLQQPGQ. The span at 296 to 365 shows a compositional bias: low complexity; it reads QQQPAQGQQG…QQQPGQGQQG (70 aa). Over residues 370–384 the composition is skewed to polar residues; sequence SLQQPGQQGHYPTSL. 4 stretches are compositionally biased toward low complexity: residues 385–426, 478–514, 522–535, and 551–577; these read QQLG…GQQG, PGQR…PGQG, QGYY…PGQG, and QQTG…GQQG. Gly residues predominate over residues 590–604; it reads QQSGQGQQSGQGHQP.

The protein belongs to the gliadin/glutenin family. As to quaternary structure, disulfide-bridge linked aggregates.

In terms of biological role, glutenins are high-molecular weight seed storage proteins of wheat endosperm. Thought to be responsible for the visco-elastic property of wheat dough. The protein is Glutenin, high molecular weight subunit 12 of Triticum aestivum (Wheat).